The chain runs to 142 residues: Large ribosomal subunit protein uL13 (142 aa).

It belongs to the universal ribosomal protein uL13 family. As to quaternary structure, part of the 50S ribosomal subunit.

In terms of biological role, this protein is one of the early assembly proteins of the 50S ribosomal subunit, although it is not seen to bind rRNA by itself. It is important during the early stages of 50S assembly. The protein is Large ribosomal subunit protein uL13 of Aeromonas salmonicida (strain A449).